Reading from the N-terminus, the 218-residue chain is uncharacterized protein (218 aa).

2 stretches are compositionally biased toward polar residues: residues 1–21 (MSSQ…SSEF) and 68–102 (LNTS…SSDI). Disordered stretches follow at residues 1–39 (MSSQ…RHAS), 63–116 (EKRL…STSG), and 170–205 (GAKR…GTPQ). Positions 183 to 195 (KRQEKQSPLESRH) are enriched in basic and acidic residues.

This is an uncharacterized protein from Caenorhabditis elegans.